The primary structure comprises 430 residues: Enolase (430 aa).

Gln-163 serves as a coordination point for (2R)-2-phosphoglycerate. The Proton donor role is filled by Glu-205. Mg(2+)-binding residues include Asp-242, Glu-287, and Asp-314. Lys-339, Arg-368, Ser-369, and Lys-390 together coordinate (2R)-2-phosphoglycerate. Lys-339 (proton acceptor) is an active-site residue.

The protein belongs to the enolase family. Mg(2+) serves as cofactor.

It localises to the cytoplasm. The protein resides in the secreted. The protein localises to the cell surface. It carries out the reaction (2R)-2-phosphoglycerate = phosphoenolpyruvate + H2O. It functions in the pathway carbohydrate degradation; glycolysis; pyruvate from D-glyceraldehyde 3-phosphate: step 4/5. Functionally, catalyzes the reversible conversion of 2-phosphoglycerate (2-PG) into phosphoenolpyruvate (PEP). It is essential for the degradation of carbohydrates via glycolysis. This Bacillus cytotoxicus (strain DSM 22905 / CIP 110041 / 391-98 / NVH 391-98) protein is Enolase.